Reading from the N-terminus, the 299-residue chain is CDP-abequose synthase (299 aa).

T117 serves as a coordination point for substrate. The active-site Proton acceptor is Y134.

This sequence belongs to the NAD(P)-dependent epimerase/dehydratase family.

It carries out the reaction CDP-alpha-D-abequose + NADP(+) = CDP-4-dehydro-3,6-dideoxy-alpha-D-glucose + NADPH + H(+). It functions in the pathway bacterial outer membrane biogenesis; LPS O-antigen biosynthesis. In Salmonella typhimurium (strain LT2 / SGSC1412 / ATCC 700720), this protein is CDP-abequose synthase (rfbJ).